The sequence spans 334 residues: Serine/threonine-protein kinase SAPK3 (334 aa).

Residues 5–261 (YEALKELGAG…IPEIKKHTWF (257 aa)) form the Protein kinase domain. ATP-binding positions include 11-19 (LGAGNFGVA) and Lys-34. The active-site Proton acceptor is Asp-124.

Belongs to the protein kinase superfamily. Ser/Thr protein kinase family. In terms of processing, autophosphorylated in presence of Ca(2+). As to expression, expressed in leaves and maturing seeds, but not in roots and stems of field-grown plants.

The protein resides in the cytoplasm. The protein localises to the nucleus. The catalysed reaction is L-seryl-[protein] + ATP = O-phospho-L-seryl-[protein] + ADP + H(+). The enzyme catalyses L-threonyl-[protein] + ATP = O-phospho-L-threonyl-[protein] + ADP + H(+). Its activity is regulated as follows. Activated by phosphorylation. In terms of biological role, may play a role in signal transduction of hyperosmotic response. The protein is Serine/threonine-protein kinase SAPK3 (SAPK3) of Oryza sativa subsp. indica (Rice).